The chain runs to 400 residues: Ribosomal RNA dihydrouridine synthase (400 aa).

Ala-14, Asp-33, Asn-34, Arg-40, Gly-46, Asn-51, Val-131, Glu-367, and Phe-380 together coordinate FAD.

Belongs to the BaiN/RdsA family. RdsA subfamily. It depends on FAD as a cofactor.

The enzyme catalyses a 5,6-dihydrouridine in mRNA + NAD(+) = a uridine in mRNA + NADH + H(+). In terms of biological role, catalyzes the synthesis of 5,6-dihydrouridine (D) at position 2449 in 23S rRNA. Can use NADH as a source of reducing equivalents but not NADPH. The chain is Ribosomal RNA dihydrouridine synthase from Escherichia coli (strain K12).